The following is a 5588-amino-acid chain: Histone-lysine N-methyltransferase 2D (5588 aa).

The tract at residues 1–61 is disordered; it reads MDSQKPPAED…QKPPHDCSRG (61 aa). Residues 104–149 form a C2HC pre-PHD-type 1; degenerate zinc finger; sequence GPCEAVLPKEDASQIGFPEGLTPAHLGEPGGHCWAHHWCAAWSAGV. 2 PHD-type zinc fingers span residues 170–218 and 270–323; these read QRCS…PEHS and CPEC…CRLC. A PHD-type 2; degenerate zinc finger spans residues 226-276; sequence EARCAVCEGPGQLCDLLFCTSCGHHYHGACLDTALTARKRASWQCPECKVC. The segment at 229–274 adopts an RING-type 1; atypical zinc-finger fold; that stretch reads CAVCEGPGQLCDLLFCTSCGHHYHGACLDTALTARKRASWQCPECK. The segment at 276–321 adopts an RING-type 2; degenerate zinc-finger fold; it reads CQSCRKPGNDSKMLVCETCDKGYHTFCLKPPMEDLPAHSWKCKTCR. Disordered stretches follow at residues 438–908 and 922–1315; these read MPLL…SPII and LEYP…DDDT. The interval 439–642 is 15 X 5 AA repeats of S/P-P-P-E/P-E/A; that stretch reads PLLPPPEESP…VSRLSPPPEE (204 aa). Pro residues predominate over residues 440–463; it reads LLPPPEESPLSPPPEESPTSPPPE. Tandem repeats lie at residues 442–446, 460–464, 469–473, and 477–481. A compositionally biased stretch (low complexity) spans 464–475; it reads ASRLSPPTEESP. Pro residues-rich tracts occupy residues 490-512 and 519-560; these read GCPP…PLSP and LSPP…PPPE. 4 repeat units span residues 520–524, 529–533, 538–542, and 547–551. Residues 561–572 are compositionally biased toward low complexity; the sequence is ASRLFPPFEESP. The span at 573–614 shows a compositional bias: pro residues; the sequence is LSPPPEDSPLSPPPEASRLSPPPEDSPMSPPPEDSPMSPPPE. 4 repeat units span residues 574–578, 583–587, 592–596, and 610–614. Over residues 619-636 the composition is skewed to low complexity; the sequence is LPLPVLSHLSPLPEVSRL. Copy 15 of the repeat occupies 637–641; that stretch reads SPPPE. A compositionally biased stretch (pro residues) spans 637–677; that stretch reads SPPPEESPLSPPPEDSPASPPPEASRLSPPPEDSPASPPPE. Residues 696 to 712 show a composition bias toward low complexity; it reads DSLVSLPMEESPLSPLP. A Phosphoserine modification is found at Ser-727. Low complexity-rich tracts occupy residues 735–755, 836–851, and 876–893; these read LCPQ…CLSP, PSQS…FSPS, and LPEE…LSPQ. 3 stretches are compositionally biased toward pro residues: residues 894–908, 959–973, and 985–1012; these read LMPP…SPII, EPVP…PGSP, and LPPP…PPAL. The segment covering 1013 to 1023 has biased composition (low complexity); that stretch reads PLSVPSPLSPV. Over residues 1033–1045 the composition is skewed to basic and acidic residues; that stretch reads AELHEMETDKGPE. 3 consecutive PHD-type zinc fingers follow at residues 1071–1124, 1121–1171, and 1198–1253; these read PSPA…PMEV, PMEV…SQGD, and LGVS…SPAR. Ser-1107 is subject to Phosphoserine. Polar residues predominate over residues 1163–1172; the sequence is EISNLSQGDA. An RING-type 3; atypical zinc finger spans residues 1201 to 1251; sequence STDVSPARDEGSLRLCTDSLPETDDSLLCDTGTATSGGKAEGDKGRRRSSP. At Ser-1205 the chain carries Phosphoserine. Position 1223 is a phosphothreonine (Thr-1223). Phosphoserine is present on Ser-1226. Positions 1245–1258 are enriched in basic residues; sequence GRRRSSPARSRIKQ. Ser-1562 is modified (phosphoserine). 4 disordered regions span residues 1566 to 1721, 1751 to 1846, 1886 to 1962, and 2095 to 2641; these read KRRQ…SKLE, GRPG…MESK, GLAL…SLQR, and SADG…QRQR. The segment covering 1593–1608 has biased composition (basic and acidic residues); the sequence is PDDKKDGDLDTDDLLK. Ser-1627 bears the Phosphoserine mark. The segment covering 1631–1641 has biased composition (basic and acidic residues); that stretch reads ELGKEETEESK. 2 stretches are compositionally biased toward basic residues: residues 1658–1668 and 1709–1718; these read RQRKSHTRVKR and KQQRRARKKS. The segment covering 1762-1782 has biased composition (basic and acidic residues); that stretch reads PRADGGSDRKELMTAMHKGDD. A Phosphoserine modification is found at Ser-1791. The residue at position 1822 (Thr-1822) is a Phosphothreonine. Positions 1831–1846 are enriched in basic and acidic residues; it reads DLDRIPTEELPKMESK. Composition is skewed to low complexity over residues 1886–1896 and 1936–1947; these read GLALGSLPSSS and TTPSTPTTPTTE. Residues 2151–2166 are compositionally biased toward pro residues; the sequence is PTYPPYPSPTGAPAQP. The span at 2170-2181 shows a compositional bias: low complexity; the sequence is GTTTRPGTGQPG. Residue Ser-2196 is modified to Phosphoserine. Thr-2197 is modified (phosphothreonine). Residue Lys-2203 is modified to N6-acetyllysine. A phosphoserine mark is found at Ser-2217 and Ser-2231. A compositionally biased stretch (basic and acidic residues) spans 2237–2249; that stretch reads ESRKSLEVKKEEL. 3 positions are modified to phosphoserine: Ser-2266, Ser-2268, and Ser-2299. Composition is skewed to pro residues over residues 2308 to 2322 and 2331 to 2359; these read EPPP…PPSH and YPDP…PPRS. The span at 2366–2388 shows a compositional bias: low complexity; it reads SRVPASPQSQSSSQSPLTPRPLS. Residues 2470–2486 show a composition bias toward polar residues; the sequence is GQPTNFARSPGTGTFVG. Asymmetric dimethylarginine is present on Arg-2492. Positions 2504 to 2514 are enriched in pro residues; that stretch reads LKPPVPQPGLP. Positions 2546–2557 are enriched in low complexity; sequence PSGSPLGPNSGP. A Phosphoserine modification is found at Ser-2597. Residues 2610 to 2622 show a composition bias toward low complexity; it reads SSSSLATPELSSA. Residues 2627–2665 adopt a coiled-coil conformation; sequence ISSLSQTELEKQRQRQRLRELLIRQQIQRNTLRQEKETA. Positions 2644 to 2648 match the LXXLL motif 1 motif; sequence LRELL. Positions 2655–2806 are disordered; sequence RNTLRQEKET…QLWQQQQQQQ (152 aa). Residues 2665-2680 show a composition bias toward low complexity; the sequence is AAAAAGAVGPPGNWGA. Polar residues-rich tracts occupy residues 2691 to 2704 and 2739 to 2748; these read SRGQ…QDRS and PSSMDMNSRQ. Positions 2768–2813 form a coiled coil; it reads LQQQQQQQQQQQQQQQQQQQQQQQQQQQQQLWQQQQQQQQQQQQQA. The segment covering 2769-2806 has biased composition (low complexity); that stretch reads QQQQQQQQQQQQQQQQQQQQQQQQQQQQQLWQQQQQQQ. Arg-2829 is subject to Asymmetric dimethylarginine. Residues 3030-3034 carry the LXXLL motif 2 motif; sequence LDDLL. Residues 3069-3104 form a disordered region; the sequence is NEKAEREALLRGVEPVSLGPEERPPPAPDNSEPRLT. An N6-acetyllysine modification is found at Lys-3071. Phosphoserine occurs at positions 3122 and 3193. Disordered regions lie at residues 3129–3193 and 3271–3326; these read NTPK…LNPS and QQQQ…QSMV. The segment covering 3271–3284 has biased composition (low complexity); that stretch reads QQQQQQQQQQQQQQ. At Lys-3430 the chain carries N6-acetyllysine. Disordered stretches follow at residues 3460–3496, 3593–3617, 3633–3661, and 3678–3704; these read SGGS…TFAQ, RNKQ…VLAV, LLPA…GGMV, and QQQQ…NLAL. The stretch at 3559–3613 forms a coiled coil; sequence EKLKLVTEQQSKIQKQLDQVRKQQKEHTNLMAEYRNKQQQQQQQQQQQQQQQHSA. Over residues 3596-3610 the composition is skewed to low complexity; it reads QQQQQQQQQQQQQQQ. Residues 3712–3747 adopt a coiled-coil conformation; sequence RLLQERQLQLQQQRMQLAQKLQQQQQQQQQQQQQQH. Residue Arg-3725 is modified to Asymmetric dimethylarginine. 2 disordered regions span residues 3760–3780 and 3808–3827; these read PGVQ…PSNH and LQQQ…QGPH. Coiled-coil stretches lie at residues 3854–3883 and 3912–4052; these read RLLT…QQQQ and SLQQ…QVTL. Residues 4053–4249 are disordered; that stretch reads GPGLPVKPLQ…QGPPGAGVMP (197 aa). Low complexity-rich tracts occupy residues 4128-4159, 4172-4183, and 4226-4240; these read SQLL…PQPQ, GQQLGSGSSSES, and GSQP…QSGQ. Arg-4255 carries the asymmetric dimethylarginine modification. Residue Ser-4272 is modified to Phosphoserine. The short motif at 4279-4283 is the LXXLL motif 3 element; the sequence is LQALL. The interval 4290–4452 is disordered; that stretch reads QSQAVRQTPP…SSLVPGHLDQ (163 aa). Over residues 4294 to 4305 the composition is skewed to polar residues; it reads VRQTPPFQEPGT. Over residues 4307 to 4322 the composition is skewed to low complexity; it reads PSPLQGLLGCQPQPGG. The LXXLL motif 4 motif lies at 4310–4314; it reads LQGLL. The span at 4379–4391 shows a compositional bias: polar residues; the sequence is QLPSPSAQLTPTH. At Ser-4410 the chain carries Phosphoserine. Residues 4432 to 4445 are compositionally biased toward polar residues; the sequence is DNLTEAQKPEQSSL. The LXXLL motif 5 signature appears at 4514-4518; that stretch reads LQKLL. Lys-4516 is modified (N6-acetyllysine). Disordered regions lie at residues 4553–4596, 4664–4716, and 4729–4778; these read LQGT…EDGV, KNNL…EGAL, and AALP…QLGS. The segment covering 4670–4684 has biased composition (pro residues); that stretch reads PPTPPSSLPPTPPPS. Ser-4789 is subject to Phosphoserine. A Glycyl lysine isopeptide (Lys-Gly) (interchain with G-Cter in SUMO2) cross-link involves residue Lys-4807. Lys-4827 is modified (N6-acetyllysine). An RING-type 4; degenerate zinc finger spans residues 4829-4874; the sequence is KGSEVSVMLTVSAAAAKNLNGVMVAVAELLSMKIPNSYEVLFPDGP. Residues 4877 to 4908 are disordered; it reads AGLEPKKGEAEGPGGKEKGLSGKGPDTGPDWL. Over residues 4879-4896 the composition is skewed to basic and acidic residues; that stretch reads LEPKKGEAEGPGGKEKGL. Lys-4931 is covalently cross-linked (Glycyl lysine isopeptide (Lys-Gly) (interchain with G-Cter in SUMO2)). The segment at 4956-5031 is disordered; that stretch reads QLSAPPPEEP…SEDSRPPRLK (76 aa). Positions 4959-4982 are enriched in pro residues; the sequence is APPPEEPSPPPSPLAPSPASPPAE. The segment covering 5017–5027 has biased composition (basic and acidic residues); sequence RPPEESEDSRP. The short motif at 5041-5045 is the LXXLL motif 6 element; the sequence is LRLLL. The C2HC pre-PHD-type 2 zinc finger occupies 5080–5120; the sequence is NRRCCFCHEEGDGATDGPARLLNLDLDLWVHLNCALWSTEV. The segment at 5141 to 5188 adopts a PHD-type 7 zinc-finger fold; sequence TKCSLCQRTGATSSCNRMRCPNVYHFACAIRAKCMFFKDKTMLCPVHK. The FYR N-terminal domain occupies 5226–5286; sequence LHMFRVGGLV…CCYRCSISEN (61 aa). Residues 5287 to 5372 form the FYR C-terminal domain; it reads NGRPEFVIKV…ESCQNYLFRY (86 aa). A WDR5 interaction motif (WIN) motif is present at residues 5388–5393; sequence GCARSE. The SET domain maps to 5448 to 5564; it reads NNVYLARSRI…KGEELTYDYQ (117 aa). S-adenosyl-L-methionine is bound by residues Tyr-5502 and 5525-5526; that span reads NH. The Zn(2+) site is built by Cys-5528, Cys-5576, Cys-5578, and Cys-5583. The Post-SET domain maps to 5572–5588; it reads HKIPCHCGAWNCRKWMN.

This sequence belongs to the class V-like SAM-binding methyltransferase superfamily. Histone-lysine methyltransferase family. TRX/MLL subfamily. In terms of assembly, component of the MLL2 complex (also named ASCOM complex), at least composed of catalytic subunit KMT2D/MLL2, ASH2L, RBBP5, WDR5, NCOA6, DPY30, KDM6A, PAXIP1/PTIP, PAGR1 and alpha- and beta-tubulin. Forms a core complex with the evolutionary conserved subcomplex WRAD composed of WDR5, RBBP5, ASH2L/ASH2 and DPY30 subunits; WRAD differentially stimulates the methyltransferase activity. Interacts with ESR1; interaction is direct. Interacts (via WIN motif) with WDR5.

It is found in the nucleus. It catalyses the reaction L-lysyl(4)-[histone H3] + S-adenosyl-L-methionine = N(6)-methyl-L-lysyl(4)-[histone H3] + S-adenosyl-L-homocysteine + H(+). Its function is as follows. Histone methyltransferase that catalyzes methyl group transfer from S-adenosyl-L-methionine to the epsilon-amino group of 'Lys-4' of histone H3 (H3K4). Part of chromatin remodeling machinery predominantly forms H3K4me1 methylation marks at active chromatin sites where transcription and DNA repair take place. Acts as a coactivator for estrogen receptor by being recruited by ESR1, thereby activating transcription. This chain is Histone-lysine N-methyltransferase 2D (Kmt2d), found in Mus musculus (Mouse).